Reading from the N-terminus, the 148-residue chain is PTS system fructose-like EIIA component (148 aa).

Positions 2–145 (AALTASCIDL…DQVLALLNQT (144 aa)) constitute a PTS EIIA type-2 domain. The active-site Tele-phosphohistidine intermediate is the His64. Phosphohistidine; by HPr is present on His64.

It localises to the cytoplasm. The phosphoenolpyruvate-dependent sugar phosphotransferase system (sugar PTS), a major carbohydrate active transport system, catalyzes the phosphorylation of incoming sugar substrates concomitantly with their translocation across the cell membrane. The enzyme II FrvAB PTS system is involved in fructose transport. This Escherichia coli (strain K12) protein is PTS system fructose-like EIIA component.